Reading from the N-terminus, the 1016-residue chain is Rho family-interacting cell polarization regulator 2 (1016 aa).

Phosphoserine occurs at positions 21 and 37. The disordered stretch occupies residues A44–R73. Over residues P48 to G59 the composition is skewed to basic residues. Residues M55–G113 are involved in cell filopodia formation. A coiled-coil region spans residues L85–L112. Position 341 is a phosphoserine (S341). Positions T414–E428 are enriched in polar residues. Residues T414 to T469 are disordered. Residues S433–S442 show a composition bias toward low complexity. The segment covering E444–G454 has biased composition (basic and acidic residues). Residues S520 and S532 each carry the phosphoserine modification. The tract at residues D636 to A656 is disordered. Basic and acidic residues predominate over residues E643–A656.

It belongs to the RIPOR family. Homooligomer; homooligomerization is regulated by RHOC and leads to the formation of concatemers through the association of N- and C-termini. Interacts (phosphorylated form) with 14-3-3 proteins; these interactions occur during myogenic cell differentiation and also induces T cell proliferation arrest. Interacts (phosphorylated form) with HDAC6; this interaction occurs during early myogenic differentiation, prevents HDAC6 to deacetylate tubulin and also induces T cell proliferation arrest. Interacts with DYSF; this interaction occurs during early myogenic differentiation. Interacts with MYOF. Interacts (via active GTP- or inactive GDP-bound forms) with RHOA; this interaction is direct, blocks the loading of GTP to RHOA and decreases upon chemokine CCL19 stimulation in primary T lymphocytes. Interacts with RHOC. Interacts (via phosphorylated form) with YWHAB; this interaction occurs in a chemokine-dependent manner and does not compete for binding of RIPOR2 with RHOA nor blocks inhibition of RIPOR2-mediated RHOA activity. Interacts with YWHAE. Interacts with YWHAQ. In terms of processing, phosphorylated. Chemokine-induced phosphorylation in neutrophils occurs in a PKC- and AKT-dependent manner, resulting in RIPOR2 interaction with YWHAB and stabilization. Phosphorylated by PKCA, AKT1 and MAPKAPK1A; in vitro.

The protein localises to the cytoplasm. Its subcellular location is the cytoskeleton. It is found in the cell projection. It localises to the filopodium. The protein resides in the apical cell membrane. The protein localises to the stereocilium. Its subcellular location is the stereocilium membrane. In terms of biological role, acts as an inhibitor of the small GTPase RHOA and plays several roles in the regulation of myoblast and hair cell differentiation, lymphocyte T proliferation and neutrophil polarization. Plays a role in fetal mononuclear myoblast differentiation by promoting filopodia and myotube formation. Maintains naive T lymphocytes in a quiescent state and prevents chemokine-induced T lymphocyte responses, such as cell adhesion, polarization and migration. Involved also in the regulation of neutrophil polarization, chemotaxis and adhesion. Required for normal development of inner and outer hair cell stereocilia within the cochlea of the inner ear. Plays a role for maintaining the structural organization of the basal domain of stereocilia. Involved in mechanosensory hair cell function. Required for normal hearing. This Bos taurus (Bovine) protein is Rho family-interacting cell polarization regulator 2.